The sequence spans 516 residues: Endoglucanase 17 (516 aa).

Residues 1–29 (MALLLVSSSSSYALRVTIFLSFFFFLCNG) form the signal peptide. Asp-105 acts as the Nucleophile in catalysis. Active-site residues include His-433, Asp-484, and Glu-493.

The protein belongs to the glycosyl hydrolase 9 (cellulase E) family.

Its subcellular location is the secreted. It carries out the reaction Endohydrolysis of (1-&gt;4)-beta-D-glucosidic linkages in cellulose, lichenin and cereal beta-D-glucans.. In Arabidopsis thaliana (Mouse-ear cress), this protein is Endoglucanase 17.